The following is a 425-amino-acid chain: RNA polymerase sigma factor SigA (425 aa).

A sigma-70 factor domain-2 region spans residues 193 to 263 (MVQSNLRLVV…TRAIADQSRT (71 aa)). The short motif at 217 to 220 (DLIQ) is the Interaction with polymerase core subunit RpoC element. A sigma-70 factor domain-3 region spans residues 272 to 347 (ETISRIKKTT…EADGETPEDE (76 aa)). The sigma-70 factor domain-4 stretch occupies residues 360–413 (VLDTLSPRERDVLRLRYGLDDGRMKTLEEIGQIFNVTRERIRQIEAKALRKLRH). Positions 386–405 (LEEIGQIFNVTRERIRQIEA) form a DNA-binding region, H-T-H motif.

It belongs to the sigma-70 factor family. RpoD/SigA subfamily. As to quaternary structure, interacts transiently with the RNA polymerase catalytic core.

The protein localises to the cytoplasm. Sigma factors are initiation factors that promote the attachment of RNA polymerase to specific initiation sites and are then released. This sigma factor is the primary sigma factor during exponential growth. This chain is RNA polymerase sigma factor SigA, found in Synechocystis sp. (strain ATCC 27184 / PCC 6803 / Kazusa).